A 141-amino-acid chain; its full sequence is Large ribosomal subunit protein uL11 (141 aa).

This sequence belongs to the universal ribosomal protein uL11 family. In terms of assembly, part of the ribosomal stalk of the 50S ribosomal subunit. Interacts with L10 and the large rRNA to form the base of the stalk. L10 forms an elongated spine to which L12 dimers bind in a sequential fashion forming a multimeric L10(L12)X complex. One or more lysine residues are methylated.

In terms of biological role, forms part of the ribosomal stalk which helps the ribosome interact with GTP-bound translation factors. This is Large ribosomal subunit protein uL11 from Pseudothermotoga lettingae (strain ATCC BAA-301 / DSM 14385 / NBRC 107922 / TMO) (Thermotoga lettingae).